The primary structure comprises 396 residues: S-adenosylmethionine synthase (396 aa).

Position 16 (His16) interacts with ATP. Asp18 is a Mg(2+) binding site. K(+) is bound at residue Glu44. The L-methionine site is built by Glu57 and Gln100. A flexible loop region spans residues 100–110 (QSPDIAQGVNE). Residues 175–177 (DAK), 242–243 (RF), Asp251, 257–258 (RK), Ala274, and Lys278 each bind ATP. Residue Asp251 coordinates L-methionine. Lys282 serves as a coordination point for L-methionine.

Belongs to the AdoMet synthase family. In terms of assembly, homotetramer; dimer of dimers. Requires Mg(2+) as cofactor. The cofactor is K(+).

The protein localises to the cytoplasm. The catalysed reaction is L-methionine + ATP + H2O = S-adenosyl-L-methionine + phosphate + diphosphate. Its pathway is amino-acid biosynthesis; S-adenosyl-L-methionine biosynthesis; S-adenosyl-L-methionine from L-methionine: step 1/1. Its function is as follows. Catalyzes the formation of S-adenosylmethionine (AdoMet) from methionine and ATP. The overall synthetic reaction is composed of two sequential steps, AdoMet formation and the subsequent tripolyphosphate hydrolysis which occurs prior to release of AdoMet from the enzyme. This Streptococcus suis (strain 05ZYH33) protein is S-adenosylmethionine synthase.